The primary structure comprises 513 residues: Serine/threonine-protein phosphatase T (513 aa).

3 TPR repeats span residues 12–45 (ALERKNEGNVFVKEKHFLKAIEKYTEAIDLDSTQ), 46–79 (SIYFSNRAFAHFKVDNFQSALNDCDEAIKLDPKN), and 80–113 (IKAYHRRALSCMALLEFKKARKDLNVLLKAKPND). The catalytic stretch occupies residues 188–513 (KNMSQEFISK…MAYSNGGFGL (326 aa)). Residues Asp249, His251, Asp278, and Asn310 each coordinate Mn(2+). Catalysis depends on His311, which acts as the Proton donor/acceptor. His359 and His434 together coordinate Mn(2+).

Belongs to the PPP phosphatase family. PP-5 (PP-T) subfamily. As to quaternary structure, interacts (via TPR repeats) with HSP82 (via C-terminal MEEVD pentapeptide). Requires Mg(2+) as cofactor. The cofactor is Mn(2+).

The protein localises to the nucleus. It catalyses the reaction O-phospho-L-seryl-[protein] + H2O = L-seryl-[protein] + phosphate. The catalysed reaction is O-phospho-L-threonyl-[protein] + H2O = L-threonyl-[protein] + phosphate. With respect to regulation, stimulated by arachidonic acid and other unsaturated fatty acids, and by arachidoyl coenzyme A. In terms of biological role, protein phosphatase that specifically binds to and dephosphorylates the molecular chaperone Hsp90 (HSC82 and HSP82). Dephosphorylation positively regulates the Hsp90 chaperone machinery. This is Serine/threonine-protein phosphatase T (PPT1) from Saccharomyces cerevisiae (strain ATCC 204508 / S288c) (Baker's yeast).